The sequence spans 366 residues: N-methyltransferase fsqC (366 aa).

The first 18 residues, 1–18, serve as a signal peptide directing secretion; it reads MSSNVQDIRGWPPPFANA. N270 carries N-linked (GlcNAc...) asparagine glycosylation.

Belongs to the methyltransferase superfamily.

It functions in the pathway secondary metabolite biosynthesis. Its function is as follows. N-methyltransferase; part of the gene cluster that mediates the biosynthesis of the isoquinoline alkaloids fumisoquin A, fumisoquin B and fumisoquin C; as well as small amounts of fumipyrrole as a shunt metabolite. The products of the cluster lead to a brown coloration and are important for growth and conidiation. The nonribosomal peptide synthetase-like protein fsqF, which lacks a canonical condensation domain, is required for addition of a serine-derived dehydroalanine moiety to activated tyrosine but is not essential for the subsequent steps leading to isoquinoline formation. A different enzyme, most likely the ATP-grasp enzyme fsqD, is responsible for activation of tyrosine. Three additional enzymes encoded by the fsq cluster, the N-methyltransferase fsqC, the phenol 2-monooxygenase fsqG and the FAD-dependent oxidase fsqB, catalyze the formation of the isoquinoline ring system in the fumisoquins. FsqB converts the fspF thiolation domain-bound (2S,4S,5S)-2-amino-6-(3,4-dihydroxyphenyl)-4-hydroxy-5-(methylamino)hexanoyl into isoquinoline. The cyclization most likely proceeds via a two-step mechanism, beginning with FAD-dependent oxidation of the methyl group to an iminium species followed by electrophilic attack on the deprotonated phenol. This Aspergillus fumigatus (strain ATCC MYA-4609 / CBS 101355 / FGSC A1100 / Af293) (Neosartorya fumigata) protein is N-methyltransferase fsqC.